Reading from the N-terminus, the 229-residue chain is Protein MC132 (229 aa).

As to quaternary structure, interacts with host RELA (via RHD domain), ELOB, ELOC and CUL5; these interactions induce the proteasomal degradation of host RELA.

It is found in the host cytoplasm. In terms of biological role, inhibits host NF-kappa-B activation stimulated by IL-1 and multiple PRR viral detection pathways. Targets host NF-kappa-B component RELA/p65 for ubiquitin-dependent proteasomal degradation. This chain is Protein MC132 (MC132), found in Homo sapiens (Human).